The primary structure comprises 274 residues: NAD kinase (274 aa).

The Proton acceptor role is filled by Asp-59. Residues 59–60 (DG), Lys-64, 128–129 (ND), Asp-158, 169–174 (TAYALS), and Ala-193 contribute to the NAD(+) site.

It belongs to the NAD kinase family. It depends on a divalent metal cation as a cofactor.

It localises to the cytoplasm. It carries out the reaction NAD(+) + ATP = ADP + NADP(+) + H(+). Its function is as follows. Involved in the regulation of the intracellular balance of NAD and NADP, and is a key enzyme in the biosynthesis of NADP. Catalyzes specifically the phosphorylation on 2'-hydroxyl of the adenosine moiety of NAD to yield NADP. The chain is NAD kinase from Petrotoga mobilis (strain DSM 10674 / SJ95).